The sequence spans 376 residues: Chaperone protein DnaJ (376 aa).

Positions 5 to 70 (DYYEVLGLSK…QKKANYDQFG (66 aa)) constitute a J domain. A CR-type zinc finger spans residues 133-215 (GVEKEISITR…CHGKGTVRKN (83 aa)). Positions 146, 149, 163, 166, 189, 192, 203, and 206 each coordinate Zn(2+). 4 CXXCXGXG motif repeats span residues 146–153 (CDTCAGSG), 163–170 (CDKCGGTG), 189–196 (CDKCGGSG), and 203–210 (CTTCHGKG).

The protein belongs to the DnaJ family. Homodimer. The cofactor is Zn(2+).

The protein localises to the cytoplasm. In terms of biological role, participates actively in the response to hyperosmotic and heat shock by preventing the aggregation of stress-denatured proteins and by disaggregating proteins, also in an autonomous, DnaK-independent fashion. Unfolded proteins bind initially to DnaJ; upon interaction with the DnaJ-bound protein, DnaK hydrolyzes its bound ATP, resulting in the formation of a stable complex. GrpE releases ADP from DnaK; ATP binding to DnaK triggers the release of the substrate protein, thus completing the reaction cycle. Several rounds of ATP-dependent interactions between DnaJ, DnaK and GrpE are required for fully efficient folding. Also involved, together with DnaK and GrpE, in the DNA replication of plasmids through activation of initiation proteins. This chain is Chaperone protein DnaJ, found in Clostridium novyi (strain NT).